Reading from the N-terminus, the 363-residue chain is MLNKGLAEEELFSFLSKKREEDLCHSHILSSMCTVPHPIAVKAHLMFMETNLGDPGLFPGTASLERLLIERLGDLFHHREAGGYATSGGTESNIQALRIAKAQKKVDKPNVVIPETSHFSFKKACDILGIQMKTVPADRSMRTDISEVSDAIDKNTIALVGIAGSTEYGMVDDIGALATIAEEEDLYLHVDAAFGGLVIPFLPNPPAFDFALPGVSSIAVDPHKMGMSTLPAGALLVREPQMLGLLNIDTPYLTVKQEYTLAGTRPGASVAGALAVLDYMGRDGMEAVVAGCMKNTSRLIRGMETLGFPRAVTPDVNVATFITNHPAPKNWVVSQTRRGHMRIICMPHVTADMIEQFLIDIGE.

The residue at position 224 (K224) is an N6-(pyridoxal phosphate)lysine.

The protein belongs to the group II decarboxylase family. MfnA subfamily. It depends on pyridoxal 5'-phosphate as a cofactor.

The catalysed reaction is L-tyrosine + H(+) = tyramine + CO2. It carries out the reaction L-aspartate + H(+) = beta-alanine + CO2. The protein operates within cofactor biosynthesis; methanofuran biosynthesis. It functions in the pathway cofactor biosynthesis; coenzyme A biosynthesis. Catalyzes the decarboxylation of L-tyrosine to produce tyramine for methanofuran biosynthesis. Can also catalyze the decarboxylation of L-aspartate to produce beta-alanine for coenzyme A (CoA) biosynthesis. This chain is Probable L-tyrosine/L-aspartate decarboxylase, found in Methanosphaerula palustris (strain ATCC BAA-1556 / DSM 19958 / E1-9c).